Here is a 2293-residue protein sequence, read N- to C-terminus: G-protein coupled receptor 179 (2293 aa).

The first 27 residues, 1-27 (MGARAVVISSLAWGLLSCCFLCSGALG), serve as a signal peptide directing secretion. A cache-like region region spans residues 62–245 (FLYSGDVQRL…CHEGQLRPGW (184 aa)). Residue asparagine 75 is glycosylated (N-linked (GlcNAc...) asparagine). Cysteine 76 and cysteine 236 are oxidised to a cystine. Asparagine 298 carries an N-linked (GlcNAc...) asparagine glycan. 7 helical membrane-spanning segments follow: residues 383 to 403 (AVLACQACCMLAVFLSMLVAY), 416 to 436 (IVLLETILFGSLLLYFPVFIL), 445 to 465 (CVALRWVRLLGFAVVYGTIIL), 494 to 514 (LGQLLLLVLGFLVVWTAGALE), 544 to 564 (YIMVVAEMLLLCWGSFLCYAT), 585 to 602 (LLLSTAFHTARFVLVPSL), and 608 to 628 (LLLFFLHTHSTVTATLALIFI). An intrachain disulfide couples cysteine 445 to cysteine 537. A glycan (N-linked (GlcNAc...) asparagine) is linked at asparagine 661. A disordered region spans residues 733-812 (QHSRDSGSLG…GRESLADGPP (80 aa)). Low complexity predominate over residues 738 to 759 (SGSLGLGSLPGSSRRRLLSSSL). Residues 773 to 782 (STYDHHREHN) show a composition bias toward basic and acidic residues. Asparagine 823 carries an N-linked (GlcNAc...) asparagine glycan. Disordered stretches follow at residues 872–935 (EERK…HPPI), 1046–1235 (GTGE…NPAL), 1275–1294 (ERTEGGSLEKKPSRQVLSRS), 1326–1345 (EAVCPWESPDSGGLSPQLVH), 1388–1411 (GTSTQRVQELPEERQKSPKKATFW), 1479–1560 (ELAG…HGGS), 1578–1770 (ATLS…VCPW), 1792–1828 (TVGKGLEREPGCEPERQRRQNLEEAGLPFQEEGTSKG), 1844–1882 (WKPPAQVPKVSDLPLSTVGQGVEGQSLEASDRASEKGEL), 1924–2051 (SSSH…GSEK), and 2212–2293 (FLPE…WDCE). Residues 1080–1089 (LKTPLQQGSV) show a composition bias toward polar residues. Basic and acidic residues-rich tracts occupy residues 1105-1123 (TYKEKDGGEGTPETEKGKP), 1173-1186 (CQKEGSREQEDRNK), and 1275-1286 (ERTEGGSLEKKP). 2 stretches are compositionally biased toward basic and acidic residues: residues 1546–1555 (ASSKAGEKLL) and 1597–1632 (RTSEHPSKGEVHKDEEKMPGRARIKAQEEAEGRIQK). Residues 1644–1663 (PGSTPQRDTEKAQASLQRQG) show a composition bias toward polar residues. Composition is skewed to basic and acidic residues over residues 1682-1698 (GEERTIGAEASEARPND) and 1717-1728 (KKSERLGSEKEV). Over residues 1737-1747 (PGDSSQQPDTP) the composition is skewed to polar residues. 3 stretches are compositionally biased toward basic and acidic residues: residues 1748–1761 (NTEKLKDELQEHGS), 1796–1813 (GLEREPGCEPERQRRQNL), and 1872–1882 (ASDRASEKGEL). Polar residues predominate over residues 1937–1948 (RVSSQPLVSTGD). Basic and acidic residues predominate over residues 1979 to 2007 (TETEMSRQDEKEKSQEEKERAPETRDHEG). Over residues 2283-2293 (SPPPDYPWDCE) the composition is skewed to pro residues.

It belongs to the G-protein coupled receptor 3 family. As to quaternary structure, homodimer. Associates with the R7 group RGS-GNB5 complexes, composed of an R7 group RGS subunit (RGS6, RGS7, RGS9 or RGS11) and GNB5, promoting their localization to the cell membrane and regulating the GTPase activator activity of R7 RGS proteins. Interacts with TRPM1. Interacts with GRM6. Interacts with EGFLAM; transsynaptic interaction is required for synaptic organization of photoreceptor cells.

It is found in the cell membrane. It localises to the postsynaptic cell membrane. Its subcellular location is the cell projection. The protein localises to the dendrite. Orphan receptor involved in vision. Required for signal transduction through retinal depolarizing bipolar cells. Acts as an atypical G-protein coupled receptor that recruits and regulates the R7 group RGS-GNB5 complexes instead of activating G proteins: promotes the GTPase activator activity of R7 RGS proteins, increasing the GTPase activity of G protein alpha subunits, thereby driving them into their inactive GDP-bound form. Associates with components of metabotropic signaling cascade in retina ON-bipolar neurons, such as TRPM1 and GRM6: may control the ability of the GRM6 cascade to gate TRPM1. In Mus musculus (Mouse), this protein is G-protein coupled receptor 179.